A 710-amino-acid polypeptide reads, in one-letter code: Nucleolar complex protein 2 (710 aa).

2 stretches are compositionally biased toward basic residues: residues 1–17 and 25–38; these read MGKV…KHLK and KEKI…GRRG. Residues 1–64 are disordered; sequence MGKVSKSTKK…QQLKKSAKEE (64 aa). At serine 70 the chain carries Phosphoserine. Basic and acidic residues predominate over residues 76–85; the sequence is EKGIEIPKEN. Disordered regions lie at residues 76-114, 138-169, and 672-710; these read EKGI…GQSM, FAGT…SEQM, and RLMR…MSDA. Over residues 97 to 110 the composition is skewed to acidic residues; the sequence is SDEDSSSSEEEEDM. Phosphoserine occurs at positions 149, 160, and 166. Composition is skewed to basic and acidic residues over residues 156–169 and 672–691; these read AERN…SEQM and RLMR…EEAK. The segment covering 697–710 has biased composition (acidic residues); sequence ESDDDNEDVEMSDA. Residues serine 698 and serine 708 each carry the phosphoserine modification.

This sequence belongs to the NOC2 family. In terms of assembly, interacts with MAK21/NOC1 and NOC3. Forms a nucleolar complex with MAK21 that binds to 90S and 66S pre-ribosomes, as well as a nuclear complex with NOC3 that binds to 66S pre-ribosomes.

The protein localises to the nucleus. The protein resides in the nucleolus. In terms of biological role, involved in the intranuclear transport of ribosomal precursors. The sequence is that of Nucleolar complex protein 2 (NOC2) from Saccharomyces cerevisiae (strain ATCC 204508 / S288c) (Baker's yeast).